The following is a 180-amino-acid chain: Hypoxanthine-guanine phosphoribosyltransferase (180 aa).

Diphosphate contacts are provided by Lys43 and Gly44. The Mg(2+) site is built by Glu99 and Asp100. Asp103 acts as the Proton acceptor in catalysis. Residues Lys131, 152–153 (FI), and Asp159 contribute to the GMP site. Arg165 serves as a coordination point for diphosphate.

This sequence belongs to the purine/pyrimidine phosphoribosyltransferase family. Mg(2+) serves as cofactor.

It localises to the cytoplasm. It catalyses the reaction IMP + diphosphate = hypoxanthine + 5-phospho-alpha-D-ribose 1-diphosphate. It carries out the reaction GMP + diphosphate = guanine + 5-phospho-alpha-D-ribose 1-diphosphate. It functions in the pathway purine metabolism; IMP biosynthesis via salvage pathway; IMP from hypoxanthine: step 1/1. The protein operates within purine metabolism; GMP biosynthesis via salvage pathway; GMP from guanine: step 1/1. Purine salvage pathway enzyme that catalyzes the transfer of the ribosyl-5-phosphate group from 5-phospho-alpha-D-ribose 1-diphosphate (PRPP) to the N9 position of the 6-oxopurines hypoxanthine and guanine to form the corresponding ribonucleotides IMP (inosine 5'-monophosphate) and GMP (guanosine 5'-monophosphate), with the release of PPi. The protein is Hypoxanthine-guanine phosphoribosyltransferase (hpt) of Streptococcus thermophilus (strain CNRZ 1066).